Here is a 63-residue protein sequence, read N- to C-terminus: Large ribosomal subunit protein uL29 (63 aa).

Belongs to the universal ribosomal protein uL29 family.

This chain is Large ribosomal subunit protein uL29, found in Pseudoalteromonas translucida (strain TAC 125).